The primary structure comprises 230 residues: Large ribosomal subunit protein uL1 (230 aa).

It belongs to the universal ribosomal protein uL1 family. Part of the 50S ribosomal subunit.

In terms of biological role, binds directly to 23S rRNA. The L1 stalk is quite mobile in the ribosome, and is involved in E site tRNA release. Its function is as follows. Protein L1 is also a translational repressor protein, it controls the translation of the L11 operon by binding to its mRNA. The polypeptide is Large ribosomal subunit protein uL1 (Desulforapulum autotrophicum (strain ATCC 43914 / DSM 3382 / VKM B-1955 / HRM2) (Desulfobacterium autotrophicum)).